Consider the following 521-residue polypeptide: Glucose-1-phosphate adenylyltransferase small subunit, chloroplastic/amyloplastic (521 aa).

The interval 1 to 32 (MAASIGALKSSPSSNNCINERRNDSTRAVSSR) is disordered. The N-terminal 72 residues, 1 to 72 (MAASIGALKS…RSPMIVSPKA (72 aa)), are a transit peptide targeting the chloroplast. Lys-268 provides a ligand contact to substrate. The interval 444 to 454 (TDADRKLLAAK) is allosteric regulation.

It belongs to the bacterial/plant glucose-1-phosphate adenylyltransferase family. As to quaternary structure, heterotetramer. Leaves and tubers.

It is found in the plastid. The protein resides in the chloroplast. It localises to the amyloplast. It catalyses the reaction alpha-D-glucose 1-phosphate + ATP + H(+) = ADP-alpha-D-glucose + diphosphate. It participates in glycan biosynthesis; starch biosynthesis. Activated by 3'phosphoglycerate, inhibited by orthophosphate. Allosteric regulation. Functionally, this protein plays a role in synthesis of starch. It catalyzes the synthesis of the activated glycosyl donor, ADP-glucose from Glc-1-P and ATP. The chain is Glucose-1-phosphate adenylyltransferase small subunit, chloroplastic/amyloplastic from Solanum tuberosum (Potato).